We begin with the raw amino-acid sequence, 322 residues long: Putative HTH-type transcriptional regulatory protein rrnAC2519 (322 aa).

Positions 132 to 189 constitute an HTH cro/C1-type domain; sequence LADVREDRDWSLGRLAKELGVSRRTVSKYEDGMDASVEVAAELEDLFDAPLTSPVSVL. Residues 143–162 constitute a DNA-binding region (H-T-H motif); sequence LGRLAKELGVSRRTVSKYED.

This Haloarcula marismortui (strain ATCC 43049 / DSM 3752 / JCM 8966 / VKM B-1809) (Halobacterium marismortui) protein is Putative HTH-type transcriptional regulatory protein rrnAC2519.